The following is a 643-amino-acid chain: NAD-dependent malic enzyme, mitochondrial (643 aa).

The N-terminal 38 residues, 1-38 (PRVRSFIAHQSGITSVIRRSPDIAHRMVRSLSVSSQRN), are a transit peptide targeting the mitochondrion. Residues Gln-116, Arg-119, and Arg-143 each coordinate fumarate. Catalysis depends on Tyr-164, which acts as the Proton donor. Arg-219 serves as a coordination point for (S)-malate. Arg-219 serves as a coordination point for NAD(+). Lys-237 functions as the Proton acceptor in the catalytic mechanism. Positions 309 and 310 each coordinate a divalent metal cation. NAD(+) is bound by residues Asn-313, Asp-333, Ala-366, Ala-369, and Asn-472. Asp-333 is a binding site for a divalent metal cation. (S)-malate contacts are provided by Asn-472 and Asn-516.

It belongs to the malic enzymes family. In terms of assembly, homotetramer. It depends on Mg(2+) as a cofactor. Requires Mn(2+) as cofactor.

The protein localises to the mitochondrion matrix. The catalysed reaction is (S)-malate + NAD(+) = pyruvate + CO2 + NADH. The enzyme catalyses oxaloacetate + H(+) = pyruvate + CO2. With respect to regulation, subject to allosteric activation by fumarate. Its function is as follows. NAD-dependent mitochondrial malic enzyme that catalyzes the oxidative decarboxylation of malate to pyruvate. The polypeptide is NAD-dependent malic enzyme, mitochondrial (Ascaris suum (Pig roundworm)).